Here is a 138-residue protein sequence, read N- to C-terminus: Basic phospholipase A2 Cll-N6 (138 aa).

The signal sequence occupies residues 1–16 (MRTFWIVAVLLVGVEG). 7 disulfides stabilise this stretch: Cys42/Cys131, Cys44/Cys60, Cys59/Cys111, Cys65/Cys138, Cys66/Cys104, Cys73/Cys97, and Cys91/Cys102. Residues Tyr43, Gly45, and Gly47 each contribute to the Ca(2+) site. His63 is a catalytic residue. Residue Asp64 coordinates Ca(2+). Asp105 is an active-site residue.

Monomer. The cofactor is Ca(2+). In terms of tissue distribution, expressed by the venom gland.

It localises to the secreted. It catalyses the reaction a 1,2-diacyl-sn-glycero-3-phosphocholine + H2O = a 1-acyl-sn-glycero-3-phosphocholine + a fatty acid + H(+). Functionally, snake venom phospholipase A2 (PLA2) that shows myotoxic activities. PLA2 catalyzes the calcium-dependent hydrolysis of the 2-acyl groups in 3-sn-phosphoglycerides. In Crotalus lepidus lepidus (Mottled rock rattlesnake), this protein is Basic phospholipase A2 Cll-N6.